The chain runs to 316 residues: uncharacterized protein (316 aa).

The protein to yeast YGR277c.

This is an uncharacterized protein from Schizosaccharomyces pombe (strain 972 / ATCC 24843) (Fission yeast).